The chain runs to 209 residues: Thiamine-phosphate synthase (209 aa).

Residues 36 to 40 (QYRDK) and asparagine 68 contribute to the 4-amino-2-methyl-5-(diphosphooxymethyl)pyrimidine site. Residues aspartate 69 and aspartate 87 each contribute to the Mg(2+) site. Residue threonine 106 coordinates 4-amino-2-methyl-5-(diphosphooxymethyl)pyrimidine. 133-135 (SST) is a binding site for 2-[(2R,5Z)-2-carboxy-4-methylthiazol-5(2H)-ylidene]ethyl phosphate. Lysine 136 provides a ligand contact to 4-amino-2-methyl-5-(diphosphooxymethyl)pyrimidine. Glycine 163 is a binding site for 2-[(2R,5Z)-2-carboxy-4-methylthiazol-5(2H)-ylidene]ethyl phosphate.

The protein belongs to the thiamine-phosphate synthase family. Requires Mg(2+) as cofactor.

The enzyme catalyses 2-[(2R,5Z)-2-carboxy-4-methylthiazol-5(2H)-ylidene]ethyl phosphate + 4-amino-2-methyl-5-(diphosphooxymethyl)pyrimidine + 2 H(+) = thiamine phosphate + CO2 + diphosphate. It carries out the reaction 2-(2-carboxy-4-methylthiazol-5-yl)ethyl phosphate + 4-amino-2-methyl-5-(diphosphooxymethyl)pyrimidine + 2 H(+) = thiamine phosphate + CO2 + diphosphate. It catalyses the reaction 4-methyl-5-(2-phosphooxyethyl)-thiazole + 4-amino-2-methyl-5-(diphosphooxymethyl)pyrimidine + H(+) = thiamine phosphate + diphosphate. Its pathway is cofactor biosynthesis; thiamine diphosphate biosynthesis; thiamine phosphate from 4-amino-2-methyl-5-diphosphomethylpyrimidine and 4-methyl-5-(2-phosphoethyl)-thiazole: step 1/1. Its function is as follows. Condenses 4-methyl-5-(beta-hydroxyethyl)thiazole monophosphate (THZ-P) and 2-methyl-4-amino-5-hydroxymethyl pyrimidine pyrophosphate (HMP-PP) to form thiamine monophosphate (TMP). This chain is Thiamine-phosphate synthase, found in Pseudomonas paraeruginosa (strain DSM 24068 / PA7) (Pseudomonas aeruginosa (strain PA7)).